The primary structure comprises 352 residues: Transcription factor MYB86 (352 aa).

HTH myb-type domains follow at residues 9 to 61 (KQKL…INYL) and 62 to 116 (RPDL…KKKL). DNA-binding regions (H-T-H motif) lie at residues 37–61 (WSSV…INYL) and 89–112 (WSQI…NSCL).

Expressed in stems, flowers and seeds. Weakly expressed in leaves and roots.

The protein resides in the nucleus. Its function is as follows. Probable transcription factor. This Arabidopsis thaliana (Mouse-ear cress) protein is Transcription factor MYB86 (MYB86).